Here is a 450-residue protein sequence, read N- to C-terminus: Regulator of sigma E protease (450 aa).

His22 is a binding site for Zn(2+). Residue Glu23 is part of the active site. His26 lines the Zn(2+) pocket. The helical transmembrane segment at 98–120 threads the bilayer; that stretch reads AAIIAAGPVANFIFAIFAYWLVF. PDZ domains follow at residues 115–186 and 199–291; these read AYWL…APFG and HWAF…TPDT. Helical transmembrane passes span 376-398 and 426-445; these read VIYY…LFPL and FSYR…ALFN.

It belongs to the peptidase M50B family. As to quaternary structure, interacts with RseA. Zn(2+) is required as a cofactor.

The protein resides in the cell inner membrane. Its function is as follows. A site-2 regulated intramembrane protease (S2P) that cleaves the peptide bond between 'Ala-108' and 'Cys-109' in the transmembrane region of RseA. Part of a regulated intramembrane proteolysis (RIP) cascade. Acts on DegS-cleaved RseA to release the cytoplasmic domain of RseA. This provides the cell with sigma-E (RpoE) activity through the proteolysis of RseA. In Salmonella typhi, this protein is Regulator of sigma E protease (rseP).